A 255-amino-acid polypeptide reads, in one-letter code: Indole-3-glycerol phosphate synthase (255 aa).

This sequence belongs to the TrpC family.

The enzyme catalyses 1-(2-carboxyphenylamino)-1-deoxy-D-ribulose 5-phosphate + H(+) = (1S,2R)-1-C-(indol-3-yl)glycerol 3-phosphate + CO2 + H2O. It functions in the pathway amino-acid biosynthesis; L-tryptophan biosynthesis; L-tryptophan from chorismate: step 4/5. The sequence is that of Indole-3-glycerol phosphate synthase (trpC) from Priestia megaterium (strain ATCC 12872 / QMB1551) (Bacillus megaterium).